A 101-amino-acid polypeptide reads, in one-letter code: NAD(P)H-quinone oxidoreductase subunit 4L, chloroplastic (101 aa).

3 consecutive transmembrane segments (helical) span residues 2–22, 32–52, and 61–81; these read ILEHVLVLSAYLFSIGIYGLI, MCLELILNAVNINFVTFSDFF, and IFSIFVIAIAAAEAAIGPAIL.

This sequence belongs to the complex I subunit 4L family. NDH is composed of at least 16 different subunits, 5 of which are encoded in the nucleus.

The protein resides in the plastid. It is found in the chloroplast thylakoid membrane. It carries out the reaction a plastoquinone + NADH + (n+1) H(+)(in) = a plastoquinol + NAD(+) + n H(+)(out). The catalysed reaction is a plastoquinone + NADPH + (n+1) H(+)(in) = a plastoquinol + NADP(+) + n H(+)(out). NDH shuttles electrons from NAD(P)H:plastoquinone, via FMN and iron-sulfur (Fe-S) centers, to quinones in the photosynthetic chain and possibly in a chloroplast respiratory chain. The immediate electron acceptor for the enzyme in this species is believed to be plastoquinone. Couples the redox reaction to proton translocation, and thus conserves the redox energy in a proton gradient. The sequence is that of NAD(P)H-quinone oxidoreductase subunit 4L, chloroplastic from Platanus occidentalis (Sycamore).